Here is a 227-residue protein sequence, read N- to C-terminus: Heptaprenylglyceryl phosphate synthase (227 aa).

Lys-13 contributes to the sn-glycerol 1-phosphate binding site. 2 residues coordinate Mg(2+): Asp-15 and Thr-41. Residues 159–164 (YLEYSG), Gly-189, and 209–210 (GN) contribute to the sn-glycerol 1-phosphate site.

Belongs to the GGGP/HepGP synthase family. Group I subfamily. In terms of assembly, homodimer. Mg(2+) is required as a cofactor.

It catalyses the reaction sn-glycerol 1-phosphate + all-trans-heptaprenyl diphosphate = 3-heptaprenyl-sn-glycero-1-phosphate + diphosphate. It participates in membrane lipid metabolism; glycerophospholipid metabolism. Prenyltransferase that catalyzes in vivo the transfer of the heptaprenyl moiety of heptaprenyl pyrophosphate (HepPP; 35 carbon atoms) to the C3 hydroxyl of sn-glycerol-1-phosphate (G1P), producing heptaprenylglyceryl phosphate (HepGP). This reaction is an ether-bond-formation step in the biosynthesis of archaea-type G1P-based membrane lipids found in Bacillales. The sequence is that of Heptaprenylglyceryl phosphate synthase from Exiguobacterium sibiricum (strain DSM 17290 / CCUG 55495 / CIP 109462 / JCM 13490 / 255-15).